A 568-amino-acid chain; its full sequence is Serine/threonine-protein kinase WNK2 (568 aa).

Residues 24 to 281 (GRYDEILGKG…ALELLQDPFL (258 aa)) enclose the Protein kinase domain. ATP-binding positions include 104-107 (TELF) and Lys154. The active-site Proton acceptor is the Asp171. Residues 453–473 (SSGEKSHHNHHEFDSSEDKSC) form a disordered region. The span at 463-472 (HEFDSSEDKS) shows a compositional bias: basic and acidic residues.

It belongs to the protein kinase superfamily. Ser/Thr protein kinase family. WNK subfamily. In terms of processing, autophosphorylated.

It carries out the reaction L-seryl-[protein] + ATP = O-phospho-L-seryl-[protein] + ADP + H(+). The catalysed reaction is L-threonyl-[protein] + ATP = O-phospho-L-threonyl-[protein] + ADP + H(+). Functionally, regulates flowering time by modulating the photoperiod pathway. Possesses kinase activity in vitro. The sequence is that of Serine/threonine-protein kinase WNK2 (WNK2) from Arabidopsis thaliana (Mouse-ear cress).